A 404-amino-acid polypeptide reads, in one-letter code: Ethanolamine-phosphate cytidylyltransferase (404 aa).

The tract at residues 173–201 is disordered; it reads YADSFGKPPHPTPAGDTLSSEVSSQCPGG. Polar residues predominate over residues 189–201; it reads TLSSEVSSQCPGG. CTP-binding positions include 239–240, 247–250, Lys277, 325–328, and 354–358; these read AF, HVDF, HGKT, and SGSDL. Position 356 is a phosphoserine (Ser356). Phosphothreonine is present on residues Thr359 and Thr360.

This sequence belongs to the cytidylyltransferase family.

The enzyme catalyses phosphoethanolamine + CTP + H(+) = CDP-ethanolamine + diphosphate. The protein operates within phospholipid metabolism; phosphatidylethanolamine biosynthesis; phosphatidylethanolamine from ethanolamine: step 2/3. Its function is as follows. Ethanolamine-phosphate cytidylyltransferase that catalyzes the second step in the synthesis of phosphatidylethanolamine (PE) from ethanolamine via the CDP-ethanolamine pathway. Phosphatidylethanolamine is a dominant inner-leaflet phospholipid in cell membranes, where it plays a role in membrane function by structurally stabilizing membrane-anchored proteins, and participates in important cellular processes such as cell division, cell fusion, blood coagulation, and apoptosis. The chain is Ethanolamine-phosphate cytidylyltransferase (Pcyt2) from Mus musculus (Mouse).